Here is a 101-residue protein sequence, read N- to C-terminus: Small ribosomal subunit protein uS10 (101 aa).

The protein belongs to the universal ribosomal protein uS10 family. In terms of assembly, part of the 30S ribosomal subunit.

Involved in the binding of tRNA to the ribosomes. In Flavobacterium psychrophilum (strain ATCC 49511 / DSM 21280 / CIP 103535 / JIP02/86), this protein is Small ribosomal subunit protein uS10.